The following is a 312-amino-acid chain: Malate dehydrogenase (312 aa).

NAD(+)-binding positions include 7–13 and D34; that span reads GAAGGIG. Residues R81 and R87 each coordinate substrate. Residues N94 and 117–119 each bind NAD(+); that span reads ITN. Substrate-binding residues include N119 and R153. H177 (proton acceptor) is an active-site residue. An NAD(+)-binding site is contributed by M227.

It belongs to the LDH/MDH superfamily. MDH type 1 family. Homodimer.

The enzyme catalyses (S)-malate + NAD(+) = oxaloacetate + NADH + H(+). In terms of biological role, catalyzes the reversible oxidation of malate to oxaloacetate. This Shigella dysenteriae serotype 1 (strain Sd197) protein is Malate dehydrogenase.